We begin with the raw amino-acid sequence, 353 residues long: Anthranilate phosphoribosyltransferase (353 aa).

Residues glycine 79, 82–83 (GD), threonine 87, 89–92 (NIST), 107–115 (KHGNHSFTS), and serine 119 contribute to the 5-phospho-alpha-D-ribose 1-diphosphate site. Position 79 (glycine 79) interacts with anthranilate. Serine 91 lines the Mg(2+) pocket. Anthranilate is bound at residue asparagine 110. Residue arginine 165 coordinates anthranilate. The Mg(2+) site is built by aspartate 223 and glutamate 224.

This sequence belongs to the anthranilate phosphoribosyltransferase family. Homodimer. The cofactor is Mg(2+).

The enzyme catalyses N-(5-phospho-beta-D-ribosyl)anthranilate + diphosphate = 5-phospho-alpha-D-ribose 1-diphosphate + anthranilate. It participates in amino-acid biosynthesis; L-tryptophan biosynthesis; L-tryptophan from chorismate: step 2/5. Functionally, catalyzes the transfer of the phosphoribosyl group of 5-phosphorylribose-1-pyrophosphate (PRPP) to anthranilate to yield N-(5'-phosphoribosyl)-anthranilate (PRA). This is Anthranilate phosphoribosyltransferase from Methanococcoides burtonii (strain DSM 6242 / NBRC 107633 / OCM 468 / ACE-M).